Consider the following 216-residue polypeptide: Probable GTP-binding protein EngB (216 aa).

The EngB-type G domain maps to 23 to 197; sequence EGAEIAFAGR…EHKVAGWLGL (175 aa). GTP contacts are provided by residues 31-38, 58-62, 76-79, 143-146, and 176-178; these read GRSNAGKS, GRTQL, DLPG, TKCD, and FSS. Residues S38 and T60 each contribute to the Mg(2+) site.

It belongs to the TRAFAC class TrmE-Era-EngA-EngB-Septin-like GTPase superfamily. EngB GTPase family. The cofactor is Mg(2+).

Its function is as follows. Necessary for normal cell division and for the maintenance of normal septation. This Aromatoleum aromaticum (strain DSM 19018 / LMG 30748 / EbN1) (Azoarcus sp. (strain EbN1)) protein is Probable GTP-binding protein EngB.